The following is a 201-amino-acid chain: Protease (201 aa).

Catalysis depends on residues His55, Asp72, and Cys122.

Belongs to the peptidase C5 family. As to quaternary structure, interacts with protease cofactor pVI-C; this interaction is necessary for protease activation.

It is found in the virion. The protein resides in the host nucleus. The catalysed reaction is Cleaves proteins of the adenovirus and its host cell at two consensus sites: -Yaa-Xaa-Gly-Gly-|-Xaa- and -Yaa-Xaa-Gly-Xaa-|-Gly- (in which Yaa is Met, Ile or Leu, and Xaa is any amino acid).. With respect to regulation, requires DNA and protease cofactor for maximal activation. Inside nascent virions, becomes partially activated by binding to the viral DNA, allowing it to cleave the cofactor that binds to the protease and fully activates it. Actin, like the viral protease cofactor, seems to act as a cofactor in the cleavage of cytokeratin 18 and of actin itself. Its function is as follows. Cleaves viral precursor proteins (pTP, pIIIa, pVI, pVII, pVIII, and pX) inside newly assembled particles giving rise to mature virions. Protease complexed to its cofactor slides along the viral DNA to specifically locate and cleave the viral precursors. Mature virions have a weakened organization compared to the unmature virions, thereby facilitating subsequent uncoating. Without maturation, the particle lacks infectivity and is unable to uncoat. Late in adenovirus infection, in the cytoplasm, may participate in the cytoskeleton destruction. Cleaves host cell cytoskeletal keratins K7 and K18. In Ovis aries (Sheep), this protein is Protease.